The following is a 660-amino-acid chain: Arginine--tRNA ligase, cytoplasmic (660 aa).

The could be involved in the assembly of the multisynthetase complex stretch occupies residues 1–72 (MELPVCFYEE…LEEKKKSSKS (72 aa)). L-arginine is bound by residues 200–202 (SPN), H211, Y384, D388, and Q412. A 'HIGH' region motif is present at residues 201 to 212 (PNIAKEMHVGHL). Residues 529–543 (NTAAYLLYAYTRIRS) are interaction with tRNA.

Belongs to the class-I aminoacyl-tRNA synthetase family. Monomer; also part of a multisubunit complex that groups tRNA ligases for Arg, Asp, Glu, Gln, Ile, Leu, Lys, Met and Pro.

It is found in the cytoplasm. It localises to the cytosol. The catalysed reaction is tRNA(Arg) + L-arginine + ATP = L-arginyl-tRNA(Arg) + AMP + diphosphate. In terms of biological role, forms part of a macromolecular complex that catalyzes the attachment of specific amino acids to cognate tRNAs during protein synthesis. This is Arginine--tRNA ligase, cytoplasmic (rars1) from Xenopus tropicalis (Western clawed frog).